The chain runs to 279 residues: Release factor glutamine methyltransferase (279 aa).

D139 and N182 together coordinate S-adenosyl-L-methionine. 182–185 provides a ligand contact to substrate; that stretch reads NPPY.

Belongs to the protein N5-glutamine methyltransferase family. PrmC subfamily.

The enzyme catalyses L-glutaminyl-[peptide chain release factor] + S-adenosyl-L-methionine = N(5)-methyl-L-glutaminyl-[peptide chain release factor] + S-adenosyl-L-homocysteine + H(+). Methylates the class 1 translation termination release factors RF1/PrfA and RF2/PrfB on the glutamine residue of the universally conserved GGQ motif. This is Release factor glutamine methyltransferase from Thermodesulfovibrio yellowstonii (strain ATCC 51303 / DSM 11347 / YP87).